We begin with the raw amino-acid sequence, 98 residues long: Defensin-like protein 192 (98 aa).

The signal sequence occupies residues 1–27 (MATKSVSTFAIFFILVLAIFETPEIEA). 4 disulfide bridges follow: cysteine 32–cysteine 86, cysteine 45–cysteine 69, cysteine 54–cysteine 81, and cysteine 58–cysteine 83.

The protein belongs to the DEFL family. Protease inhibitor I18 (RTI/MTI-2) subfamily.

It is found in the secreted. The sequence is that of Defensin-like protein 192 (ATTI7) from Arabidopsis thaliana (Mouse-ear cress).